A 174-amino-acid polypeptide reads, in one-letter code: uncharacterized protein (174 aa).

This sequence belongs to the gamma-class carbonic anhydrase family.

This is an uncharacterized protein from Pseudomonas aeruginosa (strain ATCC 15692 / DSM 22644 / CIP 104116 / JCM 14847 / LMG 12228 / 1C / PRS 101 / PAO1).